Consider the following 181-residue polypeptide: Peptidyl-tRNA hydrolase (181 aa).

Tyrosine 14 lines the tRNA pocket. Residue histidine 19 is the Proton acceptor of the active site. The tRNA site is built by phenylalanine 60, asparagine 62, and asparagine 106.

This sequence belongs to the PTH family. As to quaternary structure, monomer.

It is found in the cytoplasm. It carries out the reaction an N-acyl-L-alpha-aminoacyl-tRNA + H2O = an N-acyl-L-amino acid + a tRNA + H(+). Its function is as follows. Hydrolyzes ribosome-free peptidyl-tRNAs (with 1 or more amino acids incorporated), which drop off the ribosome during protein synthesis, or as a result of ribosome stalling. In terms of biological role, catalyzes the release of premature peptidyl moieties from peptidyl-tRNA molecules trapped in stalled 50S ribosomal subunits, and thus maintains levels of free tRNAs and 50S ribosomes. The sequence is that of Peptidyl-tRNA hydrolase from Campylobacter curvus (strain 525.92).